We begin with the raw amino-acid sequence, 56 residues long: Large ribosomal subunit protein bL32 (56 aa).

Residues M1–R38 are disordered. Residues K7–R16 are compositionally biased toward basic residues. The span at S21–A31 shows a compositional bias: polar residues.

The protein belongs to the bacterial ribosomal protein bL32 family.

This is Large ribosomal subunit protein bL32 from Shewanella woodyi (strain ATCC 51908 / MS32).